The primary structure comprises 470 residues: TNF receptor-associated factor 4 (470 aa).

Residues 18-58 form an RING-type zinc finger; it reads CPLCGKPMREPVQVSTCGHRFCDTCLQEFLSEGVFKCPEDQ. TRAF-type zinc fingers lie at residues 102–154, 155–208, and 209–266; these read HLNT…EAYE, SHEG…DTIQ, and SHQY…KLAM. Lys-263 is covalently cross-linked (Glycyl lysine isopeptide (Lys-Gly) (interchain with G-Cter in ubiquitin)). The stretch at 277 to 309 forms a coiled coil; the sequence is HLAMMCALVSRQRQELQELRRELEELSVGSDGV. The MATH domain occupies 307–462; it reads DGVLIWKIGS…DDAVFIRAAV (156 aa). Phosphoserine is present on Ser-426.

Belongs to the TNF receptor-associated factor family. B subfamily. As to quaternary structure, homotrimer. Interacts with LTBR/TNFRSF3, NGFR/TNFRSF16, RPS6KB1 and TGFB1I1. Interacts with SMURF1. Interacts (via TRAF domain) with MAP3K4 (via kinase domain). Interacts with NCF1, TICAM1, IRAK1 and TRAF6, and is probably part of a complex containing TRAF4, NCF1, TICAM1, IRAK1 and TRAF6. Interacts (via MATH domain) with GP6 and GP1BB. Interacts with EGFR (via C-terminal region); this interaction promotes the formation of EGFR asymmetric dimers. Interacts with PKM; this interaction promotes PKM kinase activity. Polyubiquitinated, leading to its proteasomal degradation. Ubiquitinated at Lys-263 by the SCF(FBXL2) complex, leading to its degradation by the proteasome. As to expression, expressed in epithelial cells of thymus, dendritic cells of lymph node, and in the basal cell layer of epithelia such as epidermis, nasopharynx, respiratory tract, salivary gland, and esophagus.

Its subcellular location is the cytoplasm. It localises to the nucleus. The protein localises to the perinuclear region. The protein resides in the cell junction. It is found in the tight junction. Its subcellular location is the cell membrane. It localises to the cytoskeleton. It carries out the reaction S-ubiquitinyl-[E2 ubiquitin-conjugating enzyme]-L-cysteine + [acceptor protein]-L-lysine = [E2 ubiquitin-conjugating enzyme]-L-cysteine + N(6)-ubiquitinyl-[acceptor protein]-L-lysine.. Its pathway is protein degradation; proteasomal ubiquitin-dependent pathway. Functionally, adapter protein with E3 ligase activity that is involved in many diverse biological processes including cell proliferation, migration, differentiation, DNA repair, platelet activation or apoptosis. Promotes EGFR-mediated signaling by facilitating the dimerization of EGFR and downstream AKT activation thereby promoting cell proliferation. Ubiquitinates SMURF2 through 'Lys-48'-linked ubiquitin chain leading to SMURF2 degradation through the proteasome and subsequently osteogenic differentiation. Promotes 'Lys-63'-mediated ubiquitination of CHK1 which in turn activates cell cycle arrest and activation of DNA repair. In addition, promotes an atypical 'Lys-29'-linked ubiquitination at the C-terminal end of IRS1 which is crucial for insulin-like growth factor (IGF) signal transduction. Regulates activation of NF-kappa-B in response to signaling through Toll-like receptors. Required for normal skeleton development, and for normal development of the respiratory tract. Required for activation of RPS6KB1 in response to TNF signaling. Modulates TRAF6 functions. Inhibits adipogenic differentiation by activating pyruvate kinase PKM activity and subsequently the beta-catenin signaling pathway. This Homo sapiens (Human) protein is TNF receptor-associated factor 4 (TRAF4).